A 499-amino-acid polypeptide reads, in one-letter code: UDP-N-acetylmuramoyl-L-alanyl-D-glutamate--2,6-diaminopimelate ligase (499 aa).

Serine 32 is a binding site for UDP-N-acetyl-alpha-D-muramoyl-L-alanyl-D-glutamate. An ATP-binding site is contributed by glycine 117 to threonine 123. Residues threonine 159–threonine 160, serine 186, glutamine 192, and arginine 194 each bind UDP-N-acetyl-alpha-D-muramoyl-L-alanyl-D-glutamate. Position 226 is an N6-carboxylysine (lysine 226). Meso-2,6-diaminopimelate is bound by residues arginine 394, aspartate 418–arginine 421, glycine 469, and glutamate 473. A Meso-diaminopimelate recognition motif motif is present at residues aspartate 418–arginine 421.

Belongs to the MurCDEF family. MurE subfamily. Mg(2+) serves as cofactor. In terms of processing, carboxylation is probably crucial for Mg(2+) binding and, consequently, for the gamma-phosphate positioning of ATP.

It is found in the cytoplasm. It catalyses the reaction UDP-N-acetyl-alpha-D-muramoyl-L-alanyl-D-glutamate + meso-2,6-diaminopimelate + ATP = UDP-N-acetyl-alpha-D-muramoyl-L-alanyl-gamma-D-glutamyl-meso-2,6-diaminopimelate + ADP + phosphate + H(+). It participates in cell wall biogenesis; peptidoglycan biosynthesis. Its function is as follows. Catalyzes the addition of meso-diaminopimelic acid to the nucleotide precursor UDP-N-acetylmuramoyl-L-alanyl-D-glutamate (UMAG) in the biosynthesis of bacterial cell-wall peptidoglycan. The polypeptide is UDP-N-acetylmuramoyl-L-alanyl-D-glutamate--2,6-diaminopimelate ligase (Synechococcus sp. (strain WH7803)).